We begin with the raw amino-acid sequence, 298 residues long: Glycine--tRNA ligase alpha subunit (298 aa).

Belongs to the class-II aminoacyl-tRNA synthetase family. In terms of assembly, tetramer of two alpha and two beta subunits.

The protein resides in the cytoplasm. The catalysed reaction is tRNA(Gly) + glycine + ATP = glycyl-tRNA(Gly) + AMP + diphosphate. The sequence is that of Glycine--tRNA ligase alpha subunit from Neisseria meningitidis serogroup C / serotype 2a (strain ATCC 700532 / DSM 15464 / FAM18).